The primary structure comprises 225 residues: Transcriptional activator protein CUP2 (225 aa).

The copper-fist DNA-binding region spans 1–40; sequence MVVINGVKYACETCIRGHRAAQCTHTDGPLQMIRRKGRPS. The interval 1 to 108 is binds copper and DNA; that stretch reads MVVINGVKYA…KSKGGSCHRR (108 aa). Zn(2+)-binding residues include cysteine 11, cysteine 14, cysteine 23, and histidine 25. The required for transcriptional activation stretch occupies residues 109-225; it reads ANDEAAHVNG…QVSSHNSHSQ (117 aa).

The protein resides in the nucleus. Functionally, trans-acting regulatory protein that activates transcription of the CUP1 gene (metallothionein) in response to copper ions. Binds to the CUP1 UAS sequence 5'-GCTTCTTTTCCGCTGA-3'. Binds DNA only in presence of copper or silver. Copper seems to alter the conformation of the protein. This Saccharomyces cerevisiae (strain ATCC 204508 / S288c) (Baker's yeast) protein is Transcriptional activator protein CUP2 (CUP2).